The chain runs to 278 residues: Probable endonuclease 4 (278 aa).

9 residues coordinate Zn(2+): histidine 70, histidine 108, glutamate 143, aspartate 176, histidine 179, histidine 210, aspartate 223, histidine 225, and glutamate 255.

This sequence belongs to the AP endonuclease 2 family. It depends on Zn(2+) as a cofactor.

It carries out the reaction Endonucleolytic cleavage to 5'-phosphooligonucleotide end-products.. In terms of biological role, endonuclease IV plays a role in DNA repair. It cleaves phosphodiester bonds at apurinic or apyrimidinic (AP) sites, generating a 3'-hydroxyl group and a 5'-terminal sugar phosphate. This chain is Probable endonuclease 4, found in Mycoplasmopsis agalactiae (strain NCTC 10123 / CIP 59.7 / PG2) (Mycoplasma agalactiae).